The following is a 75-amino-acid chain: Small ribosomal subunit protein bS18 (75 aa).

Belongs to the bacterial ribosomal protein bS18 family. As to quaternary structure, part of the 30S ribosomal subunit. Forms a tight heterodimer with protein bS6.

Its function is as follows. Binds as a heterodimer with protein bS6 to the central domain of the 16S rRNA, where it helps stabilize the platform of the 30S subunit. The chain is Small ribosomal subunit protein bS18 from Ruegeria sp. (strain TM1040) (Silicibacter sp.).